The following is a 322-amino-acid chain: Ribose-phosphate pyrophosphokinase 1 (322 aa).

ATP-binding positions include 39–41 (DGE) and 98–99 (RQ). Residues His132 and Asp173 each contribute to the Mg(2+) site. Residue Lys196 is part of the active site. D-ribose 5-phosphate is bound by residues Arg198, Asp224, and 228-232 (DTAGT).

Belongs to the ribose-phosphate pyrophosphokinase family. Class I subfamily. As to quaternary structure, homohexamer. Mg(2+) is required as a cofactor.

The protein resides in the cytoplasm. It catalyses the reaction D-ribose 5-phosphate + ATP = 5-phospho-alpha-D-ribose 1-diphosphate + AMP + H(+). It participates in metabolic intermediate biosynthesis; 5-phospho-alpha-D-ribose 1-diphosphate biosynthesis; 5-phospho-alpha-D-ribose 1-diphosphate from D-ribose 5-phosphate (route I): step 1/1. In terms of biological role, involved in the biosynthesis of the central metabolite phospho-alpha-D-ribosyl-1-pyrophosphate (PRPP) via the transfer of pyrophosphoryl group from ATP to 1-hydroxyl of ribose-5-phosphate (Rib-5-P). The protein is Ribose-phosphate pyrophosphokinase 1 of Streptococcus pneumoniae serotype 4 (strain ATCC BAA-334 / TIGR4).